The chain runs to 447 residues: N-succinylarginine dihydrolase (447 aa).

Substrate is bound by residues Ala19–Ser28, Asn110, and His137–Arg138. The active site involves Glu174. Residue Arg212 participates in substrate binding. His248 is a catalytic residue. Substrate-binding residues include Asp250 and Asn359. Cys365 functions as the Nucleophile in the catalytic mechanism.

The protein belongs to the succinylarginine dihydrolase family. As to quaternary structure, homodimer.

The enzyme catalyses N(2)-succinyl-L-arginine + 2 H2O + 2 H(+) = N(2)-succinyl-L-ornithine + 2 NH4(+) + CO2. Its pathway is amino-acid degradation; L-arginine degradation via AST pathway; L-glutamate and succinate from L-arginine: step 2/5. In terms of biological role, catalyzes the hydrolysis of N(2)-succinylarginine into N(2)-succinylornithine, ammonia and CO(2). This chain is N-succinylarginine dihydrolase, found in Escherichia coli O17:K52:H18 (strain UMN026 / ExPEC).